A 431-amino-acid polypeptide reads, in one-letter code: C2H2 type master regulator of conidiophore development brlA (431 aa).

Disordered stretches follow at residues 29 to 51 (MTSS…SHGS), 211 to 275 (TPQQ…SEEY), and 287 to 306 (IRTH…VRSN). Low complexity predominate over residues 30–48 (TSSFSPLESPTPTPTSLYS). Over residues 225-265 (PSSNYSDFPASLQTFKPHTPSTPVRSLSLGTPRSDTPQSRM) the composition is skewed to polar residues. Over residues 287–302 (IRTHRQPSRKPSKKQL) the composition is skewed to basic residues. 2 consecutive C2H2-type zinc fingers follow at residues 321–345 (FKCK…MKSH) and 351–376 (HVCW…TKTH). A disordered region spans residues 390-412 (DETSPDYDPEFRGQLTPDGRPIY).

It is found in the nucleus. In terms of biological role, brlA, abaA and wetA are pivotal regulators of conidiophore development and conidium maturation. They act individually and together to regulate their own expression and that of numerous other sporulation-specific genes. Binds promoters of target genes at brlA response elements (BREs) containing the conserved sequence 5'-(C/A)(A/G)AGGG(G/A)-3'. Regulates the expression levels of seven secondary metabolism gene clusters including a down-regulated cluster putatively involved in the biosynthesis of the mycotoxins roquefortine C and meleagrin. Negatively regulates the expression of cellulase genes. In Penicillium oxalicum (strain 114-2 / CGMCC 5302) (Penicillium decumbens), this protein is C2H2 type master regulator of conidiophore development brlA.